We begin with the raw amino-acid sequence, 690 residues long: Proprotein convertase subtilisin/kexin type 9 (690 aa).

The first 28 residues, 1–28 (MGTVRSRRLWWPLPLLLLLLLGPAGARA), serve as a signal peptide directing secretion. Positions 29–150 (QEDDDGDYEE…IEEDSYVFAQ (122 aa)) are excised as a propeptide. Tyr36 carries the sulfotyrosine modification. Ser45 is modified (phosphoserine). The 73-residue stretch at 75 to 147 (TYVVVLKEET…VDYIEEDSYV (73 aa)) folds into the Inhibitor I9 domain. The region spanning 153 to 459 (PWNLERITPA…GWQLFCRTVW (307 aa)) is the Peptidase S8 domain. Active-site charge relay system residues include Asp184 and His224. 2 disulfides stabilise this stretch: Cys221-Cys253 and Cys321-Cys356. Ser384 (charge relay system) is an active-site residue. Positions 448-690 (GAGWQLFCRT…HLAQASQELQ (243 aa)) are C-terminal domain. 3 cysteine pairs are disulfide-bonded: Cys455/Cys525, Cys475/Cys524, and Cys484/Cys507. An N-linked (GlcNAc...) asparagine glycan is attached at Asn531. 6 disulfide bridges follow: Cys532-Cys599, Cys550-Cys598, Cys560-Cys586, Cys606-Cys677, Cys624-Cys676, and Cys633-Cys652. A Phosphoserine modification is found at Ser686.

Belongs to the peptidase S8 family. Monomer. Can self-associate to form dimers and higher multimers which may have increased LDLR degrading activity. The precursor protein but not the mature protein may form multimers. Interacts with APOB, VLDLR, LRP8/APOER2 and BACE1. The full-length immature form (pro-PCSK9) interacts with SCNN1A, SCNN1B and SCNN1G. The pro-PCSK9 form (via C-terminal domain) interacts with LDLR. Interacts (via the C-terminal domain) with ANXA2 (via repeat Annexin 1); the interaction inhibits the degradation of LDLR. It depends on Ca(2+) as a cofactor. Cleavage by furin and PCSK5 generates a truncated inactive protein that is unable to induce LDLR degradation. In terms of processing, undergoes autocatalytic cleavage in the endoplasmic reticulum to release the propeptide from the N-terminus and the cleavage of the propeptide is strictly required for its maturation and activation. The cleaved propeptide however remains associated with the catalytic domain through non-covalent interactions, preventing potential substrates from accessing its active site. As a result, it is secreted from cells as a propeptide-containing, enzymatically inactive protein. Post-translationally, phosphorylation protects the propeptide against proteolysis.

The protein localises to the cytoplasm. Its subcellular location is the secreted. The protein resides in the endosome. It is found in the lysosome. It localises to the cell surface. The protein localises to the endoplasmic reticulum. Its subcellular location is the golgi apparatus. Its activity is regulated as follows. Its proteolytic activity is autoinhibited by the non-covalent binding of the propeptide to the catalytic domain. Inhibited by EGTA. Its function is as follows. Crucial player in the regulation of plasma cholesterol homeostasis. Binds to low-density lipid receptor family members: low density lipoprotein receptor (LDLR), very low density lipoprotein receptor (VLDLR), apolipoprotein E receptor (LRP1/APOER) and apolipoprotein receptor 2 (LRP8/APOER2), and promotes their degradation in intracellular acidic compartments. Acts via a non-proteolytic mechanism to enhance the degradation of the hepatic LDLR through a clathrin LDLRAP1/ARH-mediated pathway. May prevent the recycling of LDLR from endosomes to the cell surface or direct it to lysosomes for degradation. Can induce ubiquitination of LDLR leading to its subsequent degradation. Inhibits intracellular degradation of APOB via the autophagosome/lysosome pathway in a LDLR-independent manner. Involved in the disposal of non-acetylated intermediates of BACE1 in the early secretory pathway. Inhibits epithelial Na(+) channel (ENaC)-mediated Na(+) absorption by reducing ENaC surface expression primarily by increasing its proteasomal degradation. Regulates neuronal apoptosis via modulation of LRP8/APOER2 levels and related anti-apoptotic signaling pathways. The sequence is that of Proprotein convertase subtilisin/kexin type 9 (PCSK9) from Lagothrix lagotricha (Brown woolly monkey).